We begin with the raw amino-acid sequence, 119 residues long: NADH-quinone oxidoreductase subunit A (119 aa).

Transmembrane regions (helical) follow at residues 7-27, 63-83, and 88-108; these read FPVL…MTIG, LIAI…PWGV, and IGWP…VGFV.

This sequence belongs to the complex I subunit 3 family. In terms of assembly, NDH-1 is composed of 14 different subunits. Subunits NuoA, H, J, K, L, M, N constitute the membrane sector of the complex.

The protein localises to the cell inner membrane. It catalyses the reaction a quinone + NADH + 5 H(+)(in) = a quinol + NAD(+) + 4 H(+)(out). Its function is as follows. NDH-1 shuttles electrons from NADH, via FMN and iron-sulfur (Fe-S) centers, to quinones in the respiratory chain. The immediate electron acceptor for the enzyme in this species is believed to be ubiquinone. Couples the redox reaction to proton translocation (for every two electrons transferred, four hydrogen ions are translocated across the cytoplasmic membrane), and thus conserves the redox energy in a proton gradient. This Ralstonia nicotianae (strain ATCC BAA-1114 / GMI1000) (Ralstonia solanacearum) protein is NADH-quinone oxidoreductase subunit A.